The sequence spans 320 residues: N-acetylneuraminate lyase (320 aa).

Thr51 and Thr52 together coordinate aceneuramate. The Proton donor role is filled by Tyr143. Lys173 serves as the catalytic Schiff-base intermediate with substrate. The aceneuramate site is built by Ser175, Gly199, Asp201, Glu202, and Ser218.

This sequence belongs to the DapA family. NanA subfamily. In terms of assembly, homotetramer.

The protein localises to the cytoplasm. The enzyme catalyses aceneuramate = aldehydo-N-acetyl-D-mannosamine + pyruvate. Its pathway is amino-sugar metabolism; N-acetylneuraminate degradation. In terms of biological role, catalyzes the cleavage of N-acetylneuraminic acid (sialic acid) to form pyruvate and N-acetylmannosamine via a Schiff base intermediate. It prevents sialic acids from being recycled and returning to the cell surface. Involved in the N-glycolylneuraminic acid (Neu5Gc) degradation pathway. This Rattus norvegicus (Rat) protein is N-acetylneuraminate lyase.